The primary structure comprises 74 residues: ATP synthase subunit 9, mitochondrial (74 aa).

A run of 2 helical transmembrane segments spans residues 12–32 (LATIGLAGAGVGVGLVFAALI) and 50–70 (ILGFALTEAIGLFALMMAFLL).

The protein belongs to the ATPase C chain family. As to quaternary structure, F-type ATPases have 2 components, CF(1) - the catalytic core - and CF(0) - the membrane proton channel. CF(1) has five subunits: alpha(3), beta(3), gamma(1), delta(1), epsilon(1). CF(0) has three main subunits: a, b and c.

It localises to the mitochondrion membrane. In terms of biological role, mitochondrial membrane ATP synthase (F(1)F(0) ATP synthase or Complex V) produces ATP from ADP in the presence of a proton gradient across the membrane which is generated by electron transport complexes of the respiratory chain. F-type ATPases consist of two structural domains, F(1) - containing the extramembraneous catalytic core and F(0) - containing the membrane proton channel, linked together by a central stalk and a peripheral stalk. During catalysis, ATP synthesis in the catalytic domain of F(1) is coupled via a rotary mechanism of the central stalk subunits to proton translocation. Part of the complex F(0) domain. A homomeric c-ring of probably 10 subunits is part of the complex rotary element. This Rhizopus oryzae (Mucormycosis agent) protein is ATP synthase subunit 9, mitochondrial.